The primary structure comprises 668 residues: DNA ligase (668 aa).

NAD(+) is bound by residues 32-36 (DAEYD), 81-82 (SL), and Glu-111. Residue Lys-113 is the N6-AMP-lysine intermediate of the active site. Arg-134, Glu-171, Lys-290, and Lys-314 together coordinate NAD(+). Residues Cys-408, Cys-411, Cys-426, and Cys-432 each coordinate Zn(2+). The BRCT domain occupies 591–668 (EEDLSLKGQT…DEEALIAILS (78 aa)).

Belongs to the NAD-dependent DNA ligase family. LigA subfamily. Mg(2+) is required as a cofactor. Requires Mn(2+) as cofactor.

It carries out the reaction NAD(+) + (deoxyribonucleotide)n-3'-hydroxyl + 5'-phospho-(deoxyribonucleotide)m = (deoxyribonucleotide)n+m + AMP + beta-nicotinamide D-nucleotide.. Its function is as follows. DNA ligase that catalyzes the formation of phosphodiester linkages between 5'-phosphoryl and 3'-hydroxyl groups in double-stranded DNA using NAD as a coenzyme and as the energy source for the reaction. It is essential for DNA replication and repair of damaged DNA. The chain is DNA ligase from Shewanella pealeana (strain ATCC 700345 / ANG-SQ1).